Reading from the N-terminus, the 308-residue chain is Methionyl-tRNA formyltransferase (308 aa).

109 to 112 (SLLP) contributes to the (6S)-5,6,7,8-tetrahydrofolate binding site.

This sequence belongs to the Fmt family.

The catalysed reaction is L-methionyl-tRNA(fMet) + (6R)-10-formyltetrahydrofolate = N-formyl-L-methionyl-tRNA(fMet) + (6S)-5,6,7,8-tetrahydrofolate + H(+). Its function is as follows. Attaches a formyl group to the free amino group of methionyl-tRNA(fMet). The formyl group appears to play a dual role in the initiator identity of N-formylmethionyl-tRNA by promoting its recognition by IF2 and preventing the misappropriation of this tRNA by the elongation apparatus. This is Methionyl-tRNA formyltransferase from Caulobacter vibrioides (strain NA1000 / CB15N) (Caulobacter crescentus).